A 427-amino-acid chain; its full sequence is Interferon regulatory factor 3 (427 aa).

A Phosphothreonine modification is found at Thr-3. The IRF tryptophan pentad repeat DNA-binding region spans 5–111 (KPRILPWLVS…DPHKIYEFVN (107 aa)). Ser-14 bears the Phosphoserine mark. Position 75 is a phosphothreonine (Thr-75). Positions 91-107 (RLAEDRSKDPHDPHKIY) are enriched in basic and acidic residues. Residues 91-136 (RLAEDRSKDPHDPHKIYEFVNSGVGDFSQPDTSPDTNGGGSTSDTQ) are disordered. A phosphoserine mark is found at Ser-97 and Ser-123. The Nuclear export signal motif lies at 139–149 (ILDELLGNMVL). The interval 141-427 (DELLGNMVLA…GMDFQGPGES (287 aa)) is mediates interaction with ZDHHC11. Ser-175 carries the post-translational modification (Microbial infection) Phosphoserine. Thr-180 is modified (phosphothreonine). Ser-188 bears the Phosphoserine mark. Residue Lys-193 forms a Glycyl lysine isopeptide (Lys-Gly) (interchain with G-Cter in ISG15) linkage. Residues 200–360 (EEWEFEVTAF…SWPQDQPWTK (161 aa)) are interaction with HERC5. A phosphothreonine mark is found at Thr-237, Thr-244, and Thr-253. Residues Cys-267 and Cys-289 are joined by a disulfide bond. Glycyl lysine isopeptide (Lys-Gly) (interchain with G-Cter in ISG15) cross-links involve residues Lys-360 and Lys-366. Lys-366 is subject to N6-acetyllysine. Ser-385 carries the post-translational modification Phosphoserine. Position 386 is a diphosphoserine (Ser-386). Ser-386 carries the phosphoserine; by TBK1 modification. Ser-396 carries the phosphoserine; by IKKE and TBK1 modification. Ser-398 carries the post-translational modification Phosphoserine. The residue at position 404 (Thr-404) is a Phosphothreonine. At Ser-427 the chain carries Phosphoserine.

Belongs to the IRF family. As to quaternary structure, monomer. Homodimer; phosphorylation-induced. Interacts (when phosphorylated) with CREBBP. Interacts with MAVS (via phosphorylated pLxIS motif). Interacts with TICAM1 (via phosphorylated pLxIS motif). Interacts with STING1 (via phosphorylated pLxIS motif). Interacts with IKBKE and TBK1. Interacts with TICAM2. Interacts with RBCK1. Interacts with HERC5. Interacts with DDX3X (phosphorylated at 'Ser-102'); the interaction allows the phosphorylation and activation of IRF3 by IKBKE. Interacts with TRIM21 and ULK1, in the presence of TRIM21; this interaction leads to IRF3 degradation by autophagy. Interacts with RIOK3; RIOK3 probably mediates the interaction of TBK1 with IRF3. Interacts with ILRUN; the interaction inhibits IRF3 binding to its DNA consensus sequence. Interacts with LYAR; this interaction impairs IRF3 DNA-binding activity. Interacts with TRAF3. Interacts with ZDHHC11; ZDHHC11 recruits IRF3 to STING1 upon DNA virus infection and thereby promotes IRF3 activation. Interacts with HSP90AA1; the interaction mediates IRF3 association with TOMM70. Interacts with BCL2; the interaction decreases upon Sendai virus infection. Interacts with BAX; the interaction is direct, increases upon Sendai virus infection and mediates the formation of the apoptosis complex TOMM70:HSP90AA1:IRF3:BAX. Interacts with DDX56. Interacts with NBR1. In terms of assembly, (Microbial infection) Interacts with rotavirus A NSP1 (via pLxIS motif); this interaction leads to the proteasome-dependent degradation of IRF3. (Microbial infection) Interacts with herpes virus 8/HHV-8 protein VIRF1. As to quaternary structure, (Microbial infection) Interacts with Seneca Valley virus protease 3C; this interaction is involved in the suppression of IRF3 expression and phosphorylation by the virus. In terms of assembly, (Microbial infection) Interacts with herpes virus 2/HHV-2 protein ICP27; this interaction inhibits IRF3 phosphorylation and nuclear translocation. (Microbial infection) Interacts with human cytomegalovirus protein UL44; this interaction prevents IRF3 binding to its promoters. As to quaternary structure, (Microbial infection) Interacts with the two fragments of MERS-COV protein N produced by CASP6 through proteolytic cleavage; both interactions inhibit IRF3 nuclear translocation after activation and IFN signaling. Post-translationally, constitutively phosphorylated on many Ser/Thr residues. Activated following phosphorylation by TBK1 and IKBKE. Innate adapter proteins, such as MAVS, STING1 or TICAM1, are first activated by viral RNA, cytosolic DNA, and bacterial lipopolysaccharide (LPS), respectively, leading to activation of the kinases TBK1 and IKBKE. These kinases then phosphorylate the adapter proteins on the pLxIS motif, leading to recruitment of IRF3, thereby licensing IRF3 for phosphorylation by TBK1. Phosphorylation at Ser-386 is followed by pyrophosphorylation at the same residue, promoting phosphorylation at Ser-396. Phosphorylated IRF3 dissociates from the adapter proteins, dimerizes, and then enters the nucleus to induce IFNs. In terms of processing, pyrophosphorylated by UAP1 following phosphorylation at Ser-386 by TBK1. Pyrophosphorylation promotes subsequent phosphorylation at Ser-396, leading to homodimerization of IRF3. Acetylation at Lys-366 by KAT8 inhibits recruimtent to promoters and transcription factor activity. Acetylation by KAT8 is promoted by phosphorylation at Ser-396. Post-translationally, ubiquitinated; ubiquitination involves RBCK1 leading to proteasomal degradation. Polyubiquitinated; ubiquitination involves TRIM21 leading to proteasomal degradation. Ubiquitinated by UBE3C, leading to its degradation. Deubiquitinated by USP5 on both 'Lys-48'-linked unanchored and 'Lys-63'-linked anchored polyubiquitin, leading to inhibition of anti-RNA viral innate immunity. In terms of processing, ISGylated by HERC5 resulting in sustained IRF3 activation and in the inhibition of IRF3 ubiquitination by disrupting PIN1 binding. The phosphorylation state of IRF3 does not alter ISGylation. Proteolytically cleaved by apoptotic caspases during apoptosis, leading to its inactivation. Cleavage by CASP3 during virus-induced apoptosis inactivates it, preventing cytokine overproduction. Post-translationally, (Microbial infection) ISGylated. ISGylation is cleaved and removed by SARS-COV-2 nsp3 which attenuates type I interferon responses. In terms of processing, (Microbial infection) Phosphorylation and subsequent activation of IRF3 is inhibited by vaccinia virus protein E3. (Microbial infection) Phosphorylated by herpes simplex virus 1/HHV-1 US3 at Ser-175 to prevent IRF3 activation. Expressed constitutively in a variety of tissues.

It localises to the cytoplasm. The protein localises to the nucleus. Its subcellular location is the mitochondrion. With respect to regulation, in the absence of viral infection, maintained as a monomer in an autoinhibited state. Phosphorylation by TBK1 and IKBKE disrupts this autoinhibition leading to the liberation of the DNA-binding and dimerization activities and its nuclear localization where it can activate type I IFN and ISG genes. Phosphorylation and activation follow the following steps: innate adapter proteins, such as MAVS, STING1 or TICAM1, are first activated by viral RNA, cytosolic DNA and bacterial lipopolysaccharide (LPS), respectively, leading to activation of the kinases TBK1 and IKBKE. These kinases then phosphorylate the adapter proteins on their pLxIS motif, leading to recruitment of IRF3, thereby licensing IRF3 for phosphorylation by TBK1. Phosphorylated IRF3 dissociates from the adapter proteins, dimerizes, and then enters the nucleus to induce IFNs. (Microbial infection) Activated upon coronavirus SARS-CoV-2 infection. Key transcriptional regulator of type I interferon (IFN)-dependent immune responses which plays a critical role in the innate immune response against DNA and RNA viruses. Regulates the transcription of type I IFN genes (IFN-alpha and IFN-beta) and IFN-stimulated genes (ISG) by binding to an interferon-stimulated response element (ISRE) in their promoters. Acts as a more potent activator of the IFN-beta (IFNB) gene than the IFN-alpha (IFNA) gene and plays a critical role in both the early and late phases of the IFNA/B gene induction. Found in an inactive form in the cytoplasm of uninfected cells and following viral infection, double-stranded RNA (dsRNA), or toll-like receptor (TLR) signaling, is phosphorylated by IKBKE and TBK1 kinases. This induces a conformational change, leading to its dimerization and nuclear localization and association with CREB binding protein (CREBBP) to form dsRNA-activated factor 1 (DRAF1), a complex which activates the transcription of the type I IFN and ISG genes. Can activate distinct gene expression programs in macrophages and can induce significant apoptosis in primary macrophages. In response to Sendai virus infection, is recruited by TOMM70:HSP90AA1 to mitochondrion and forms an apoptosis complex TOMM70:HSP90AA1:IRF3:BAX inducing apoptosis. Key transcription factor regulating the IFN response during SARS-CoV-2 infection. This is Interferon regulatory factor 3 from Homo sapiens (Human).